The primary structure comprises 100 residues: Urease subunit gamma (100 aa).

It belongs to the urease gamma subunit family. In terms of assembly, heterotrimer of UreA (gamma), UreB (beta) and UreC (alpha) subunits. Three heterotrimers associate to form the active enzyme.

Its subcellular location is the cytoplasm. It carries out the reaction urea + 2 H2O + H(+) = hydrogencarbonate + 2 NH4(+). The protein operates within nitrogen metabolism; urea degradation; CO(2) and NH(3) from urea (urease route): step 1/1. The protein is Urease subunit gamma of Azoarcus sp. (strain BH72).